Reading from the N-terminus, the 394-residue chain is Phosphopentomutase (394 aa).

Mn(2+) contacts are provided by D13, D286, H291, D327, H328, and H339.

This sequence belongs to the phosphopentomutase family. It depends on Mn(2+) as a cofactor.

Its subcellular location is the cytoplasm. The enzyme catalyses 2-deoxy-alpha-D-ribose 1-phosphate = 2-deoxy-D-ribose 5-phosphate. It catalyses the reaction alpha-D-ribose 1-phosphate = D-ribose 5-phosphate. It functions in the pathway carbohydrate degradation; 2-deoxy-D-ribose 1-phosphate degradation; D-glyceraldehyde 3-phosphate and acetaldehyde from 2-deoxy-alpha-D-ribose 1-phosphate: step 1/2. Isomerase that catalyzes the conversion of deoxy-ribose 1-phosphate (dRib-1-P) and ribose 1-phosphate (Rib-1-P) to deoxy-ribose 5-phosphate (dRib-5-P) and ribose 5-phosphate (Rib-5-P), respectively. The polypeptide is Phosphopentomutase (Bacillus thuringiensis (strain Al Hakam)).